We begin with the raw amino-acid sequence, 517 residues long: Legumin A (517 aa).

The signal sequence occupies residues methionine 1 to alanine 21. 2 disulfide bridges follow: cysteine 31–cysteine 64 and cysteine 107–cysteine 339. The 197-residue stretch at leucine 36–aspartate 232 folds into the Cupin type-1 1 domain. The segment at valine 249–glutamate 335 is disordered. The 150-residue stretch at leucine 345–arginine 494 folds into the Cupin type-1 2 domain.

Belongs to the 11S seed storage protein (globulins) family. Hexamer; each subunit is composed of an acidic and a basic chain derived from a single precursor and linked by a disulfide bond.

This protein found in the seeds of many leguminous and non-leguminous plants is the source of sulfur-containing amino acids in seed meals. This Pisum sativum (Garden pea) protein is Legumin A (LEGA).